A 391-amino-acid chain; its full sequence is Arginine biosynthesis bifunctional protein ArgJ (391 aa).

6 residues coordinate substrate: threonine 149, lysine 172, threonine 183, glutamate 263, asparagine 386, and serine 391. Residue threonine 183 is the Nucleophile of the active site.

This sequence belongs to the ArgJ family. In terms of assembly, heterotetramer of two alpha and two beta chains.

It localises to the cytoplasm. It catalyses the reaction N(2)-acetyl-L-ornithine + L-glutamate = N-acetyl-L-glutamate + L-ornithine. The catalysed reaction is L-glutamate + acetyl-CoA = N-acetyl-L-glutamate + CoA + H(+). It participates in amino-acid biosynthesis; L-arginine biosynthesis; L-ornithine and N-acetyl-L-glutamate from L-glutamate and N(2)-acetyl-L-ornithine (cyclic): step 1/1. The protein operates within amino-acid biosynthesis; L-arginine biosynthesis; N(2)-acetyl-L-ornithine from L-glutamate: step 1/4. In terms of biological role, catalyzes two activities which are involved in the cyclic version of arginine biosynthesis: the synthesis of N-acetylglutamate from glutamate and acetyl-CoA as the acetyl donor, and of ornithine by transacetylation between N(2)-acetylornithine and glutamate. The chain is Arginine biosynthesis bifunctional protein ArgJ from Bifidobacterium longum (strain NCC 2705).